Here is a 458-residue protein sequence, read N- to C-terminus: Argininosuccinate lyase (458 aa).

Belongs to the lyase 1 family. Argininosuccinate lyase subfamily.

It is found in the cytoplasm. It carries out the reaction 2-(N(omega)-L-arginino)succinate = fumarate + L-arginine. The protein operates within amino-acid biosynthesis; L-arginine biosynthesis; L-arginine from L-ornithine and carbamoyl phosphate: step 3/3. The polypeptide is Argininosuccinate lyase (Salmonella heidelberg (strain SL476)).